The primary structure comprises 327 residues: COP9 signalosome complex subunit 7 (327 aa).

The PCI domain maps to 4–165 (VHHRALDALQ…NPPTVNVTSV (162 aa)). Disordered regions lie at residues 233 to 260 (GGEQLQGGNPGQGQGQGQGGLGKNAGWK) and 276 to 327 (GGSN…GKKS). The segment covering 236 to 255 (QLQGGNPGQGQGQGQGGLGK) has biased composition (gly residues). Residues 315-327 (GARHSKRFLGKKS) are compositionally biased toward basic residues.

Belongs to the CSN7/EIF3M family. CSN7 subfamily. As to quaternary structure, component of the COP9 signalosome (CSN) complex. Present in uninduced vegetative hyphae, induced conidiating cultures and in both conidiospores and ascospores.

It is found in the cytoplasm. The protein localises to the nucleus. Functionally, component of the COP9 signalosome (CSN) complex that acts as an regulator of the ubiquitin (Ubl) conjugation pathway by mediating the deneddylation of the cullin subunit of SCF-type E3 ubiquitin-protein ligase complexes. The CSN complex seems to link protein degradation to sexual development. May be required for sporulation only at elevated temperatures. This is COP9 signalosome complex subunit 7 (csnG) from Emericella nidulans (strain FGSC A4 / ATCC 38163 / CBS 112.46 / NRRL 194 / M139) (Aspergillus nidulans).